The chain runs to 523 residues: Tubulin-specific chaperone E (523 aa).

The 45-residue stretch at 31-75 folds into the CAP-Gly domain; the sequence is GEVSGHMGSWLGIEWDDGLRGKHNGIVDGKRYFQTQTPTGGSFIR. 7 LRR repeats span residues 155-180, 181-204, 209-232, 235-258, 260-284, 285-310, and 315-337; these read LTHL…IAQQ, LPSL…QITE, FRQL…MHTA, WPNI…DRTK, FKQL…KLGN, LTTL…DSQE, and FVSL…AFNE.

Belongs to the TBCE family.

The protein localises to the cytoplasm. Functionally, tubulin-folding protein which is required for the development of the neuronal microtubule network. Essential for the development and function of neuromuscular synapses. Likely to promote microtubule formation by acting in the negative regulation of the microtubule-severing protein spas. In Drosophila melanogaster (Fruit fly), this protein is Tubulin-specific chaperone E.